The sequence spans 450 residues: Protein tweety homolog 1 (450 aa).

Residues 1-43 (MGAPPGYRPSAWVHLLHQLPRADFQLRPVPSVFAPQEQEYQQA) are Extracellular-facing. Residues 44–64 (LLLVAALAGLGLGLSLIFIAV) traverse the membrane as a helical segment. At 65 to 88 (YLIRFCCCRPPEPPGSKIPSPGGG) the chain is on the cytoplasmic side. A helical membrane pass occupies residues 89–109 (CVTWSCIVALLAGCTGIGIGF). The Extracellular segment spans residues 110–214 (YGNSETSDGV…NVSFVEEYRW (105 aa)). 2 N-linked (GlcNAc...) asparagine glycosylation sites follow: Asn-130 and Asn-205. The helical transmembrane segment at 215–235 (LAYVLLLLLELLVCLFTLLGL) threads the bilayer. Over 236-240 (AKQSK) the chain is Cytoplasmic. A helical membrane pass occupies residues 241–261 (WLVIVMTVMSLLVLVLSWGSM). The Extracellular segment spans residues 262–390 (GLEAATAVGL…LRGLCEDALE (129 aa)). 2 cysteine pairs are disulfide-bonded: Cys-275–Cys-385 and Cys-303–Cys-370. N-linked (GlcNAc...) asparagine glycans are attached at residues Asn-284 and Asn-355. The chain crosses the membrane as a helical span at residues 391–411 (GLLFLLLFSLLSAGALATALC). Over 412–450 (SLPRAWALFPPSDDYDDTDDDDPFNPQESKRFVQWQSSI) the chain is Cytoplasmic. The segment at 428 to 450 (DTDDDDPFNPQESKRFVQWQSSI) is disordered. The residue at position 440 (Ser-440) is a Phosphoserine.

The protein belongs to the tweety family. In terms of assembly, homotetramer; disulfide-linked. Homodimer. In terms of processing, N-glycosylated. Contains high-mannose, hybrid and complex oligosaccharides. As to expression, expressed in brain, eye, ovary and testis, and at lower levels in muscle, placenta, liver and lung.

The protein resides in the cell membrane. It carries out the reaction chloride(in) = chloride(out). The catalysed reaction is L-glutamate(out) = L-glutamate(in). In terms of biological role, calcium-independent, swelling-dependent volume-regulated anion channel (VRAC-swell) which plays a pivotal role in the process of regulatory volume decrease (RVD) in the brain through the efflux of anions like chloride and organic osmolytes like glutamate. Its function is as follows. Ca(2+)-independent, swelling-activated chloride channel, possibly involved in regulation of cell volume. The sequence is that of Protein tweety homolog 1 (TTYH1) from Homo sapiens (Human).